Here is a 121-residue protein sequence, read N- to C-terminus: MARRAGGARMFGSLLLFALLAAGVAPLSWDLPEPRSRASKIRVHSRGNLWATGHFMGKKSLEPSSPSPLGTAPHTSLRDQRLQLSHDLLGILLLKKALGVSLSRPAPQIQYRRLLVQILQK.

The N-terminal stretch at 1–24 is a signal peptide; that stretch reads MARRAGGARMFGSLLLFALLAAGV. The residue at position 56 (M56) is a Methionine amide. The propeptide occupies 60-121; that stretch reads SLEPSSPSPL…RRLLVQILQK (62 aa).

Belongs to the bombesin/neuromedin-B/ranatensin family.

The protein resides in the secreted. It is found in the cell projection. The protein localises to the neuron projection. Its function is as follows. Stimulates smooth muscle contraction. Induces sighing by acting directly on the pre-Botzinger complex, a cluster of several thousand neurons in the ventrolateral medulla responsible for inspiration during respiratory activity. Contributes to the induction of sneezing following exposure to chemical irritants or allergens which causes release of NMB by nasal sensory neurons and activation of NMBR-expressing neurons in the sneeze-evoking region of the brainstem. These in turn activate neurons of the caudal ventral respiratory group, giving rise to the sneezing response. Contributes to induction of acute itch, possibly through activation of the NMBR receptor on dorsal root ganglion neurons. Increases expression of NMBR and steroidogenic mediators STAR, CYP11A1 and HSD3B1 in Leydig cells, induces secretion of testosterone by Leydig cells and also promotes Leydig cell proliferation. Plays a role in the innate immune response to influenza A virus infection by enhancing interferon alpha expression and reducing expression of IL6. Plays a role in CSF1-induced proliferation of osteoclast precursors by contributing to the positive regulation of the expression of the CSF1 receptor CSF1R. The protein is Neuromedin-B (NMB) of Homo sapiens (Human).